The chain runs to 520 residues: MNLKQEVESRKTFAIISHPDAGKTTLTEKLLYFSGAIREAGTVKGKKTGKFATSDWMKVEQERGISVTSSVMQFDYDDYKINILDTPGHEDFSEDTYRTLMAVDSAVMVIDCAKGIEPQTLKLFKVCKMRGIPIFTFINKLDRVGKEPFELLDEIEETLNIETYPMNWPIGMGQSFFGIIDRKSKTIEPFRDEENILHLNDDFELEEDHAITNDSAFEQAIEELMLVEEAGEAFDNDALLSGDLTPVFFGSALANFGVQNFLNAYVDFAPMPNARQTKEDVEVSPFDDSFSGFIFKIQANMDPKHRDRIAFMRVVSGAFERGMDVTLQRTNKKQKITRSTSFMADDKETVNHAVAGDIIGLYDTGNYQIGDTLVGGKQTYSFQDLPQFTPEIFMKVSAKNVMKQKHFHKGIEQLVQEGAIQYYKTLHTNQIILGAVGQLQFEVFEHRMKNEYNVDVVMEPVGRKIARWIENEDQITDKMNTSRSILVKDRYDDLVFLFENEFATRWFEEKFLEIKLYSLL.

The tr-type G domain maps to 8–277; that stretch reads ESRKTFAIIS…FAPMPNARQT (270 aa). GTP contacts are provided by residues 17 to 24, 85 to 89, and 139 to 142; these read SHPDAGKT, DTPGH, and NKLD.

It belongs to the TRAFAC class translation factor GTPase superfamily. Classic translation factor GTPase family. PrfC subfamily.

The protein localises to the cytoplasm. Functionally, increases the formation of ribosomal termination complexes and stimulates activities of RF-1 and RF-2. It binds guanine nucleotides and has strong preference for UGA stop codons. It may interact directly with the ribosome. The stimulation of RF-1 and RF-2 is significantly reduced by GTP and GDP, but not by GMP. The protein is Peptide chain release factor 3 of Staphylococcus aureus (strain JH1).